The sequence spans 638 residues: Ubiquitin-associated and SH3 domain-containing protein B (638 aa).

Position 9 is a phosphoserine (Ser9). Thr12 bears the Phosphothreonine mark. Residues 23 to 65 (TVKHGSALDVLLSMGFPRARAQKALASTGGRSVQAACDWLFSH) form the UBA domain. The 66-residue stretch at 243–308 (ANHETLQVIY…PENYITKADE (66 aa)) folds into the SH3 domain. Positions 369–638 (GPQKRCLFVC…FNWRETLLQE (270 aa)) are protein tyrosine phosphatase. The active site involves Arg379. Residue His380 is the Tele-phosphohistidine intermediate of the active site. Residue His565 is part of the active site.

In terms of assembly, homodimer. Interacts with JAK2 (in vitro). Interacts with CBL. Part of a complex containing CBL and activated EGFR. Interacts with ubiquitin and with mono-ubiquitinated proteins. Interacts with ZAP70 (ubiquitinated form). As to expression, detected in splenic T-cells and B-cells, total spleen, skeletal muscle, heart, lung, kidney, thymus, brain and liver (at protein level). Highly expressed in brain. Detected in heart, spleen, lung, liver, kidney and testis.

It is found in the cytoplasm. It localises to the nucleus. The enzyme catalyses O-phospho-L-tyrosyl-[protein] + H2O = L-tyrosyl-[protein] + phosphate. Functionally, interferes with CBL-mediated down-regulation and degradation of receptor-type tyrosine kinases. Promotes accumulation of activated target receptors, such as T-cell receptors and EGFR, on the cell surface. Exhibits tyrosine phosphatase activity toward several substrates including EGFR, FAK, SYK, and ZAP70. Down-regulates proteins that are dually modified by both protein tyrosine phosphorylation and ubiquitination. This chain is Ubiquitin-associated and SH3 domain-containing protein B (Ubash3b), found in Mus musculus (Mouse).